The chain runs to 1121 residues: RecBCD enzyme subunit RecC (1121 aa).

It belongs to the RecC family. In terms of assembly, heterotrimer of RecB, RecC and RecD. All subunits contribute to DNA-binding.

A helicase/nuclease that prepares dsDNA breaks (DSB) for recombinational DNA repair. Binds to DSBs and unwinds DNA via a highly rapid and processive ATP-dependent bidirectional helicase activity. Unwinds dsDNA until it encounters a Chi (crossover hotspot instigator) sequence from the 3' direction. Cuts ssDNA a few nucleotides 3' to the Chi site. The properties and activities of the enzyme are changed at Chi. The Chi-altered holoenzyme produces a long 3'-ssDNA overhang and facilitates RecA-binding to the ssDNA for homologous DNA recombination and repair. Holoenzyme degrades any linearized DNA that is unable to undergo homologous recombination. In the holoenzyme this subunit recognizes the wild-type Chi sequence, and when added to isolated RecB increases its ATP-dependent helicase processivity. In Haemophilus influenzae (strain ATCC 51907 / DSM 11121 / KW20 / Rd), this protein is RecBCD enzyme subunit RecC.